The sequence spans 397 residues: Serpin B10 (397 aa).

Positions 74–77 (KKRK) match the Nuclear localization signal motif.

The protein belongs to the serpin family. Ov-serpin subfamily. As to expression, expressed in many tissues, including brain, heart, kidney, liver, lung, prostate, skin, spleen and stomach.

It is found in the nucleus. The protein resides in the cytoplasm. In terms of biological role, protease inhibitor that may play a role in the regulation of protease activities during hematopoiesis and apoptosis induced by TNF. May regulate protease activities in the cytoplasm and in the nucleus. Inhibits plasmin. This chain is Serpin B10 (Serpinb10), found in Rattus norvegicus (Rat).